Consider the following 239-residue polypeptide: Ribonuclease HII (239 aa).

Residues 30–221 form the RNase H type-2 domain; the sequence is GPVAGVDEVG…VRRLVTAGTP (192 aa). Aspartate 36, glutamate 37, and aspartate 130 together coordinate a divalent metal cation.

This sequence belongs to the RNase HII family. Mn(2+) serves as cofactor. Mg(2+) is required as a cofactor.

It localises to the cytoplasm. It catalyses the reaction Endonucleolytic cleavage to 5'-phosphomonoester.. Endonuclease that specifically degrades the RNA of RNA-DNA hybrids. This chain is Ribonuclease HII, found in Mycobacterium sp. (strain KMS).